The following is a 218-amino-acid chain: Ribose-5-phosphate isomerase A (218 aa).

Substrate-binding positions include 28–31 (TGST), 81–84 (DGAD), and 94–97 (KGGG). Residue Glu103 is the Proton acceptor of the active site. Position 121 (Lys121) interacts with substrate.

This sequence belongs to the ribose 5-phosphate isomerase family. In terms of assembly, homodimer.

The catalysed reaction is aldehydo-D-ribose 5-phosphate = D-ribulose 5-phosphate. The protein operates within carbohydrate degradation; pentose phosphate pathway; D-ribose 5-phosphate from D-ribulose 5-phosphate (non-oxidative stage): step 1/1. Catalyzes the reversible conversion of ribose-5-phosphate to ribulose 5-phosphate. The sequence is that of Ribose-5-phosphate isomerase A from Vibrio cholerae serotype O1 (strain ATCC 39541 / Classical Ogawa 395 / O395).